We begin with the raw amino-acid sequence, 237 residues long: UPF0174 protein YaaW (237 aa).

Belongs to the UPF0174 family.

This Escherichia coli O157:H7 protein is UPF0174 protein YaaW.